The sequence spans 428 residues: MSAIVDIVGREVLDSRGNPTVECDVLLESGVMGRAAVPSGASTGSREAIELRDGDKSRYLGKGVLKAVEHINTEISEAVLGLDASEQGFLDKTLIDLDGTDNKSRLGANAMLAVSMAVARAAAEESGLPLYRYLGGMGSVQLPVPMMNVINGGAHANNSLDLQEFMIIPVGAPSFREAVRWGAEVFHALKKIIHDKGMSTAVGDEGGFAPSVENHEAAIQLILQAIEAAGYTAGEQIALGLDCAASEFYKDGMYVLEGEGGLQLTAQQWTDMLASWCDKYPIISIEDGMHEGDWDGWKILTERLGHNVQLVGDDLFVTNTKILKEGIDKGIANSILIKINQIGTLTETFAAIEMAKRAGYTAVISHRSGETEDSTIADIAVGTNAGQIKTGSLSRSDRIAKYNQLLRIEEDLGDIAFYPGRAAFYNLR.

A (2R)-2-phosphoglycerate-binding site is contributed by glutamine 163. The active-site Proton donor is glutamate 205. Mg(2+) is bound by residues aspartate 242, glutamate 286, and aspartate 313. Lysine 338, arginine 367, serine 368, and lysine 389 together coordinate (2R)-2-phosphoglycerate. Catalysis depends on lysine 338, which acts as the Proton acceptor.

This sequence belongs to the enolase family. Mg(2+) is required as a cofactor.

The protein resides in the cytoplasm. It localises to the secreted. The protein localises to the cell surface. The enzyme catalyses (2R)-2-phosphoglycerate = phosphoenolpyruvate + H2O. It participates in carbohydrate degradation; glycolysis; pyruvate from D-glyceraldehyde 3-phosphate: step 4/5. Its function is as follows. Catalyzes the reversible conversion of 2-phosphoglycerate (2-PG) into phosphoenolpyruvate (PEP). It is essential for the degradation of carbohydrates via glycolysis. This chain is Enolase, found in Acidovorax sp. (strain JS42).